The sequence spans 308 residues: N-acetyl-gamma-glutamyl-phosphate reductase (308 aa).

Residue Cys117 is part of the active site.

The protein belongs to the NAGSA dehydrogenase family. Type 2 subfamily.

It localises to the cytoplasm. It catalyses the reaction N-acetyl-L-glutamate 5-semialdehyde + phosphate + NADP(+) = N-acetyl-L-glutamyl 5-phosphate + NADPH + H(+). Its pathway is amino-acid biosynthesis; L-arginine biosynthesis; N(2)-acetyl-L-ornithine from L-glutamate: step 3/4. Catalyzes the NADPH-dependent reduction of N-acetyl-5-glutamyl phosphate to yield N-acetyl-L-glutamate 5-semialdehyde. The protein is N-acetyl-gamma-glutamyl-phosphate reductase of Sinorhizobium fredii (strain NBRC 101917 / NGR234).